A 104-amino-acid chain; its full sequence is L-rhamnose mutarotase (104 aa).

Residue tyrosine 18 coordinates substrate. Histidine 22 functions as the Proton donor in the catalytic mechanism. Residues tyrosine 41 and 76–77 each bind substrate; that span reads WW.

Belongs to the rhamnose mutarotase family. Homodimer.

Its subcellular location is the cytoplasm. It catalyses the reaction alpha-L-rhamnose = beta-L-rhamnose. It participates in carbohydrate metabolism; L-rhamnose metabolism. Its function is as follows. Involved in the anomeric conversion of L-rhamnose. In Listeria monocytogenes serovar 1/2a (strain ATCC BAA-679 / EGD-e), this protein is L-rhamnose mutarotase.